Consider the following 399-residue polypeptide: MTLSTSQSLLEKTALETYVPPARPSLIGLSRAELAEALGGIGVAASQRKMRAQQLWHWMYFRGVQEFAEMTSISKEMRSQLAEHFTVARPEVVAEQISNDGTRKWLLRLPSGVSGEKAHEVECVYIPETDRGTLCVSSQVGCTLNCSFCHTGTQKLVRNLTAGEIVGQVMVARDRLNDWADRETPNGNRLVTNVVMMGMGEPLYNFDAVRDALLIVSDNEGIGISRRRVTLSTSGVVPNIVRAGEEIGVMLAISLHAVRDELRDELVPLNRKYPLAELLQACRDYPGASNARRITFEYVMLKDVNDSLDDAKLLVKLLSGIPAKINLIPFNPWPGTAYKCSDWDQIEKFSEYIFNAGYSSPVRTPRGRDILAACGQLKSETEKLTAREREALRAMAMTD.

Residue glutamate 122 is the Proton acceptor of the active site. The region spanning 128-371 is the Radical SAM core domain; that stretch reads ETDRGTLCVS…VRTPRGRDIL (244 aa). A disulfide bridge links cysteine 135 with cysteine 374. Positions 142, 146, and 149 each coordinate [4Fe-4S] cluster. S-adenosyl-L-methionine-binding positions include 200–201, serine 232, 254–256, and asparagine 331; these read GE and SLH. Cysteine 374 (S-methylcysteine intermediate) is an active-site residue.

This sequence belongs to the radical SAM superfamily. RlmN family. Requires [4Fe-4S] cluster as cofactor.

It localises to the cytoplasm. It catalyses the reaction adenosine(2503) in 23S rRNA + 2 reduced [2Fe-2S]-[ferredoxin] + 2 S-adenosyl-L-methionine = 2-methyladenosine(2503) in 23S rRNA + 5'-deoxyadenosine + L-methionine + 2 oxidized [2Fe-2S]-[ferredoxin] + S-adenosyl-L-homocysteine. The enzyme catalyses adenosine(37) in tRNA + 2 reduced [2Fe-2S]-[ferredoxin] + 2 S-adenosyl-L-methionine = 2-methyladenosine(37) in tRNA + 5'-deoxyadenosine + L-methionine + 2 oxidized [2Fe-2S]-[ferredoxin] + S-adenosyl-L-homocysteine. Functionally, specifically methylates position 2 of adenine 2503 in 23S rRNA and position 2 of adenine 37 in tRNAs. m2A2503 modification seems to play a crucial role in the proofreading step occurring at the peptidyl transferase center and thus would serve to optimize ribosomal fidelity. The protein is Dual-specificity RNA methyltransferase RlmN of Rhodopseudomonas palustris (strain BisB18).